Consider the following 358-residue polypeptide: Probable D-xylulose reductase A (358 aa).

Zn(2+) is bound by residues Cys47, His72, and Glu73. Residue 182 to 187 coordinates NAD(+); it reads GAGPVG.

This sequence belongs to the zinc-containing alcohol dehydrogenase family. It depends on Zn(2+) as a cofactor.

The enzyme catalyses xylitol + NAD(+) = D-xylulose + NADH + H(+). Its pathway is carbohydrate degradation; L-arabinose degradation via L-arabinitol; D-xylulose 5-phosphate from L-arabinose (fungal route): step 4/5. In terms of biological role, xylitol dehydrogenase which catalyzes the conversion of xylitol to D-xylulose. Xylose is a major component of hemicelluloses such as xylan. Most fungi utilize D-xylose via three enzymatic reactions, xylose reductase (XR), xylitol dehydrogenase (XDH), and xylulokinase, to form xylulose 5-phosphate, which enters pentose phosphate pathway. This is Probable D-xylulose reductase A (xdhA) from Aspergillus fumigatus (strain CBS 144.89 / FGSC A1163 / CEA10) (Neosartorya fumigata).